A 247-amino-acid chain; its full sequence is Proteasome subunit alpha type-7 (247 aa).

It belongs to the peptidase T1A family. In terms of assembly, the 26S proteasome consists of a 20S proteasome core and two 19S regulatory subunits. The 20S proteasome core is composed of 28 subunits that are arranged in four stacked rings, resulting in a barrel-shaped structure. The two end rings are each formed by seven alpha subunits, and the two central rings are each formed by seven beta subunits. The catalytic chamber with the active sites is on the inside of the barrel.

It is found in the cytoplasm. The protein resides in the nucleus. Functionally, the proteasome is a multicatalytic proteinase complex which is characterized by its ability to cleave peptides with Arg, Phe, Tyr, Leu, and Glu adjacent to the leaving group at neutral or slightly basic pH. The proteasome has an ATP-dependent proteolytic activity. In Trypanosoma brucei brucei, this protein is Proteasome subunit alpha type-7 (PSA4).